We begin with the raw amino-acid sequence, 347 residues long: uncharacterized protein (347 aa).

Mn(2+)-binding residues include Asp207, Asp218, His279, Glu312, and Glu326.

Belongs to the peptidase M24B family. Mn(2+) serves as cofactor.

This is an uncharacterized protein from Methanocaldococcus jannaschii (strain ATCC 43067 / DSM 2661 / JAL-1 / JCM 10045 / NBRC 100440) (Methanococcus jannaschii).